A 227-amino-acid polypeptide reads, in one-letter code: Fibrillarin-like rRNA/tRNA 2'-O-methyltransferase (227 aa).

S-adenosyl-L-methionine contacts are provided by residues 82-83 (TT), 100-101 (EF), 125-126 (DA), and 145-148 (DVAQ).

This sequence belongs to the methyltransferase superfamily. Fibrillarin family. Interacts with nop5. Component of box C/D small ribonucleoprotein (sRNP) particles that contain rpl7ae, FlpA and nop5, plus a guide RNA.

Functionally, involved in pre-rRNA and tRNA processing. Utilizes the methyl donor S-adenosyl-L-methionine to catalyze the site-specific 2'-hydroxyl methylation of ribose moieties in rRNA and tRNA. Site specificity is provided by a guide RNA that base pairs with the substrate. Methylation occurs at a characteristic distance from the sequence involved in base pairing with the guide RNA. This chain is Fibrillarin-like rRNA/tRNA 2'-O-methyltransferase, found in Methanosarcina mazei (strain ATCC BAA-159 / DSM 3647 / Goe1 / Go1 / JCM 11833 / OCM 88) (Methanosarcina frisia).